Here is a 143-residue protein sequence, read N- to C-terminus: Large ribosomal subunit protein uL11 (143 aa).

It belongs to the universal ribosomal protein uL11 family. In terms of assembly, part of the ribosomal stalk of the 50S ribosomal subunit. Interacts with L10 and the large rRNA to form the base of the stalk. L10 forms an elongated spine to which L12 dimers bind in a sequential fashion forming a multimeric L10(L12)X complex. One or more lysine residues are methylated.

Functionally, forms part of the ribosomal stalk which helps the ribosome interact with GTP-bound translation factors. In Clavibacter michiganensis subsp. michiganensis (strain NCPPB 382), this protein is Large ribosomal subunit protein uL11.